We begin with the raw amino-acid sequence, 559 residues long: Extracellular matrix protein 1 (559 aa).

A signal peptide spans 1-19; the sequence is MGTVSRAALILACLALASA. Repeat copies occupy residues 170 to 298 and 302 to 424. Residues 170 to 424 form a 2 X approximate repeats region; it reads HCQQGRRGVW…FAHLAPYPNY (255 aa). N-linked (GlcNAc...) asparagine glycosylation occurs at N373. N463 and N535 each carry an N-linked (GlcNAc...) (high mannose) asparagine glycan. Residues 535 to 559 are disordered; the sequence is NATGLGEQGPTRGTDANPAPGSKEE. S556 bears the Phosphoserine mark.

Interacts (via C-terminus) with HSPG2 (via C-terminus). Interacts with EFEMP1/FBLN3 and LAMB3. Interacts with MMP9. In terms of tissue distribution, expressed in the surrounding connective tissues of developing long bones, but not in the cartilage. The long isoform is expressed in a number of tissues including liver, heart and lungs. The short isoform is expressed in skin and cartilage-containing tissues such as tail and front paw. No expression is found in brain.

Its subcellular location is the secreted. The protein resides in the extracellular space. The protein localises to the extracellular matrix. In terms of biological role, involved in endochondral bone formation as negative regulator of bone mineralization. Stimulates the proliferation of endothelial cells and promotes angiogenesis. Inhibits MMP9 proteolytic activity. This chain is Extracellular matrix protein 1 (Ecm1), found in Mus musculus (Mouse).